The following is a 122-amino-acid chain: Large ribosomal subunit protein bL12 (122 aa).

The protein belongs to the bacterial ribosomal protein bL12 family. In terms of assembly, homodimer. Part of the ribosomal stalk of the 50S ribosomal subunit. Forms a multimeric L10(L12)X complex, where L10 forms an elongated spine to which 2 to 4 L12 dimers bind in a sequential fashion. Binds GTP-bound translation factors.

Functionally, forms part of the ribosomal stalk which helps the ribosome interact with GTP-bound translation factors. Is thus essential for accurate translation. This chain is Large ribosomal subunit protein bL12, found in Xylella fastidiosa (strain 9a5c).